Consider the following 573-residue polypeptide: Methionine--tRNA ligase (573 aa).

The 'HIGH' region motif lies at 10–20; it reads PYVNSVPHLGN. Zn(2+) contacts are provided by C143, C146, C156, and C159. Positions 333–337 match the 'KMSKS' region motif; it reads KFSKS. Residue K336 participates in ATP binding.

The protein belongs to the class-I aminoacyl-tRNA synthetase family. MetG type 1 subfamily. Zn(2+) serves as cofactor.

It localises to the cytoplasm. The catalysed reaction is tRNA(Met) + L-methionine + ATP = L-methionyl-tRNA(Met) + AMP + diphosphate. Its function is as follows. Is required not only for elongation of protein synthesis but also for the initiation of all mRNA translation through initiator tRNA(fMet) aminoacylation. The sequence is that of Methionine--tRNA ligase from Saccharolobus solfataricus (strain ATCC 35092 / DSM 1617 / JCM 11322 / P2) (Sulfolobus solfataricus).